A 305-amino-acid polypeptide reads, in one-letter code: Ribonuclease Z (305 aa).

Zn(2+) is bound by residues His61, His63, Asp65, His66, His138, Asp208, and His266. The active-site Proton acceptor is Asp65.

It belongs to the RNase Z family. Homodimer. Zn(2+) is required as a cofactor.

It carries out the reaction Endonucleolytic cleavage of RNA, removing extra 3' nucleotides from tRNA precursor, generating 3' termini of tRNAs. A 3'-hydroxy group is left at the tRNA terminus and a 5'-phosphoryl group is left at the trailer molecule.. Functionally, zinc phosphodiesterase, which displays some tRNA 3'-processing endonuclease activity. Probably involved in tRNA maturation, by removing a 3'-trailer from precursor tRNA. In Methanosarcina mazei (strain ATCC BAA-159 / DSM 3647 / Goe1 / Go1 / JCM 11833 / OCM 88) (Methanosarcina frisia), this protein is Ribonuclease Z.